A 496-amino-acid polypeptide reads, in one-letter code: Glutamate--tRNA ligase (496 aa).

Residues 12–22 (PSPTGHLHIGN) carry the 'HIGH' region motif. The 'KMSKS' region motif lies at 259–263 (KLSKR). Lys262 provides a ligand contact to ATP.

Belongs to the class-I aminoacyl-tRNA synthetase family. Glutamate--tRNA ligase type 1 subfamily. Monomer.

It localises to the cytoplasm. The enzyme catalyses tRNA(Glu) + L-glutamate + ATP = L-glutamyl-tRNA(Glu) + AMP + diphosphate. Its function is as follows. Catalyzes the attachment of glutamate to tRNA(Glu) in a two-step reaction: glutamate is first activated by ATP to form Glu-AMP and then transferred to the acceptor end of tRNA(Glu). The chain is Glutamate--tRNA ligase from Lactiplantibacillus plantarum (strain ATCC BAA-793 / NCIMB 8826 / WCFS1) (Lactobacillus plantarum).